The primary structure comprises 264 residues: Thymidylate synthase (264 aa).

R21 is a dUMP binding site. H51 serves as a coordination point for (6R)-5,10-methylene-5,6,7,8-tetrahydrofolate. A dUMP-binding site is contributed by 126 to 127 (RR). The Nucleophile role is filled by C146. DUMP-binding positions include 166–169 (RSCD), N177, and 207–209 (HLY). Position 169 (D169) interacts with (6R)-5,10-methylene-5,6,7,8-tetrahydrofolate. Position 263 (S263) interacts with (6R)-5,10-methylene-5,6,7,8-tetrahydrofolate.

It belongs to the thymidylate synthase family. Bacterial-type ThyA subfamily. As to quaternary structure, homodimer.

The protein resides in the cytoplasm. The catalysed reaction is dUMP + (6R)-5,10-methylene-5,6,7,8-tetrahydrofolate = 7,8-dihydrofolate + dTMP. Its pathway is pyrimidine metabolism; dTTP biosynthesis. Functionally, catalyzes the reductive methylation of 2'-deoxyuridine-5'-monophosphate (dUMP) to 2'-deoxythymidine-5'-monophosphate (dTMP) while utilizing 5,10-methylenetetrahydrofolate (mTHF) as the methyl donor and reductant in the reaction, yielding dihydrofolate (DHF) as a by-product. This enzymatic reaction provides an intracellular de novo source of dTMP, an essential precursor for DNA biosynthesis. This chain is Thymidylate synthase, found in Wigglesworthia glossinidia brevipalpis.